The primary structure comprises 355 residues: Proto-oncogene Wnt-3 (355 aa).

A signal peptide spans 1–21; it reads MEPHLLGLLLGLLLSGTRVLA. 11 disulfides stabilise this stretch: C80–C91, C131–C139, C141–C158, C206–C220, C208–C215, C284–C315, C300–C310, C314–C354, C330–C345, C332–C342, and C337–C338. N90 carries N-linked (GlcNAc...) asparagine glycosylation. A lipid anchor (O-palmitoleoyl serine; by PORCN) is attached at S212. Residue N301 is glycosylated (N-linked (GlcNAc...) asparagine).

It belongs to the Wnt family. In terms of assembly, forms a soluble 1:1 complex with AFM; this prevents oligomerization and is required for prolonged biological activity. The complex with AFM may represent the physiological form in body fluids. Interacts with PORCN. Interacts with WLS. Post-translationally, palmitoleoylation is required for efficient binding to frizzled receptors. Depalmitoleoylation leads to Wnt signaling pathway inhibition. In terms of tissue distribution, detected at low levels in adult brain. Dorsal portion of the neural tube, dorsal ectoderm, the branchial arches, and the limb buds.

Its subcellular location is the secreted. The protein resides in the extracellular space. It is found in the extracellular matrix. In terms of biological role, ligand for members of the frizzled family of seven transmembrane receptors. Functions in the canonical Wnt signaling pathway that results in activation of transcription factors of the TCF/LEF family. Required for normal gastrulation, formation of the primitive streak, and for the formation of the mesoderm during early embryogenesis. Required for normal formation of the apical ectodermal ridge and for normal embryonic limb development. The sequence is that of Proto-oncogene Wnt-3 (Wnt3) from Mus musculus (Mouse).